A 126-amino-acid chain; its full sequence is Glycine cleavage system H protein (126 aa).

The Lipoyl-binding domain maps to 24–106 (TVTVGITDHA…YGEGWMYRIK (83 aa)). The residue at position 65 (Lys-65) is an N6-lipoyllysine.

Belongs to the GcvH family. The glycine cleavage system is composed of four proteins: P, T, L and H. It depends on (R)-lipoate as a cofactor.

Its function is as follows. The glycine cleavage system catalyzes the degradation of glycine. The H protein shuttles the methylamine group of glycine from the P protein to the T protein. In Psychrobacter sp. (strain PRwf-1), this protein is Glycine cleavage system H protein.